A 208-amino-acid polypeptide reads, in one-letter code: uncharacterized protein (208 aa).

The N-terminal stretch at 1–34 is a signal peptide; the sequence is MPSHCRERLPFALHFFAVAYGASLWILGSHGLAA.

This is an uncharacterized protein from Sinorhizobium fredii (strain NBRC 101917 / NGR234).